A 173-amino-acid chain; its full sequence is T-cell receptor beta-2 chain C region (173 aa).

A c region region spans residues 1–146 (EDLRNVTPPK…GVLSATILYE (146 aa)). Residues N67 and N116 are each glycosylated (N-linked (GlcNAc...) asparagine). Residues 147–168 (ILLGKATLYAVLVSGLVLMAMV) form a helical membrane-spanning segment. The Cytoplasmic segment spans residues 169–173 (KKKNS).

Its subcellular location is the membrane. The sequence is that of T-cell receptor beta-2 chain C region from Mus musculus (Mouse).